The following is a 118-amino-acid chain: UPF0102 protein CHY_1414 (118 aa).

The protein belongs to the UPF0102 family.

The chain is UPF0102 protein CHY_1414 from Carboxydothermus hydrogenoformans (strain ATCC BAA-161 / DSM 6008 / Z-2901).